The sequence spans 94 residues: Co-chaperonin GroES (94 aa).

The protein belongs to the GroES chaperonin family. Heptamer of 7 subunits arranged in a ring. Interacts with the chaperonin GroEL.

It is found in the cytoplasm. Together with the chaperonin GroEL, plays an essential role in assisting protein folding. The GroEL-GroES system forms a nano-cage that allows encapsulation of the non-native substrate proteins and provides a physical environment optimized to promote and accelerate protein folding. GroES binds to the apical surface of the GroEL ring, thereby capping the opening of the GroEL channel. The polypeptide is Co-chaperonin GroES (Lactiplantibacillus plantarum (strain ATCC BAA-793 / NCIMB 8826 / WCFS1) (Lactobacillus plantarum)).